The primary structure comprises 167 residues: Photosystem II extrinsic protein V (167 aa).

An N-terminal signal peptide occupies residues 1–30 (MVFKTLRRTLWLTLAALLAVFQFNLGAAQA). Residues cysteine 67, cysteine 70, histidine 71, and histidine 122 each contribute to the heme c site.

Belongs to the cytochrome c family. PsbV subfamily. In terms of assembly, PSII is composed of 1 copy each of membrane proteins PsbA, PsbB, PsbC, PsbD, PsbE, PsbF, PsbH, PsbI, PsbJ, PsbK, PsbL, PsbM, PsbT, PsbX, PsbY, PsbZ, Psb30/Ycf12, peripheral proteins PsbO, CyanoQ (PsbQ), PsbU, PsbV and a large number of cofactors. It forms dimeric complexes. The cofactor is heme c.

The protein resides in the cellular thylakoid membrane. Its function is as follows. One of the extrinsic, lumenal subunits of photosystem II (PSII). PSII is a light-driven water plastoquinone oxidoreductase, using light energy to abstract electrons from H(2)O, generating a proton gradient subsequently used for ATP formation. The extrinsic proteins stabilize the structure of photosystem II oxygen-evolving complex (OEC), the ion environment of oxygen evolution and protect the OEC against heat-induced inactivation. Low-potential cytochrome c that plays a role in the OEC of PSII. This Synechococcus elongatus (strain ATCC 33912 / PCC 7942 / FACHB-805) (Anacystis nidulans R2) protein is Photosystem II extrinsic protein V.